A 252-amino-acid polypeptide reads, in one-letter code: Biosynthetic peptidoglycan transglycosylase (252 aa).

Residues 23-43 (IGFLLGCIVAGVVAMQVYFFL) form a helical membrane-spanning segment.

This sequence belongs to the glycosyltransferase 51 family.

The protein resides in the cell inner membrane. The catalysed reaction is [GlcNAc-(1-&gt;4)-Mur2Ac(oyl-L-Ala-gamma-D-Glu-L-Lys-D-Ala-D-Ala)](n)-di-trans,octa-cis-undecaprenyl diphosphate + beta-D-GlcNAc-(1-&gt;4)-Mur2Ac(oyl-L-Ala-gamma-D-Glu-L-Lys-D-Ala-D-Ala)-di-trans,octa-cis-undecaprenyl diphosphate = [GlcNAc-(1-&gt;4)-Mur2Ac(oyl-L-Ala-gamma-D-Glu-L-Lys-D-Ala-D-Ala)](n+1)-di-trans,octa-cis-undecaprenyl diphosphate + di-trans,octa-cis-undecaprenyl diphosphate + H(+). It functions in the pathway cell wall biogenesis; peptidoglycan biosynthesis. Functionally, peptidoglycan polymerase that catalyzes glycan chain elongation from lipid-linked precursors. The chain is Biosynthetic peptidoglycan transglycosylase from Cupriavidus pinatubonensis (strain JMP 134 / LMG 1197) (Cupriavidus necator (strain JMP 134)).